The following is a 223-amino-acid chain: Ribonuclease T (223 aa).

Residues 20–194 (VVIDVETAGF…YDTNQTALLF (175 aa)) form the Exonuclease domain. Positions 23, 25, 181, and 186 each coordinate Mg(2+). Histidine 181 functions as the Proton donor/acceptor in the catalytic mechanism.

It belongs to the RNase T family. Homodimer. Mg(2+) is required as a cofactor.

Trims short 3' overhangs of a variety of RNA species, leaving a one or two nucleotide 3' overhang. Responsible for the end-turnover of tRNA: specifically removes the terminal AMP residue from uncharged tRNA (tRNA-C-C-A). Also appears to be involved in tRNA biosynthesis. The polypeptide is Ribonuclease T (Pectobacterium atrosepticum (strain SCRI 1043 / ATCC BAA-672) (Erwinia carotovora subsp. atroseptica)).